The sequence spans 324 residues: Beta-ketoacyl-[acyl-carrier-protein] synthase III (324 aa).

Active-site residues include cysteine 112 and histidine 251. An ACP-binding region spans residues glutamine 252–arginine 256. The active site involves asparagine 281.

This sequence belongs to the thiolase-like superfamily. FabH family. Homodimer.

The protein resides in the cytoplasm. It catalyses the reaction malonyl-[ACP] + acetyl-CoA + H(+) = 3-oxobutanoyl-[ACP] + CO2 + CoA. The protein operates within lipid metabolism; fatty acid biosynthesis. Catalyzes the condensation reaction of fatty acid synthesis by the addition to an acyl acceptor of two carbons from malonyl-ACP. Catalyzes the first condensation reaction which initiates fatty acid synthesis and may therefore play a role in governing the total rate of fatty acid production. Possesses both acetoacetyl-ACP synthase and acetyl transacylase activities. Its substrate specificity determines the biosynthesis of branched-chain and/or straight-chain of fatty acids. The protein is Beta-ketoacyl-[acyl-carrier-protein] synthase III of Clostridium perfringens (strain 13 / Type A).